Consider the following 474-residue polypeptide: Glutamate--tRNA ligase 1 (474 aa).

The 'HIGH' region signature appears at 10 to 20; sequence PSPTGFLHIGG. Residues 239 to 243 carry the 'KMSKS' region motif; sequence KLSKR. Residue Lys242 participates in ATP binding.

This sequence belongs to the class-I aminoacyl-tRNA synthetase family. Glutamate--tRNA ligase type 1 subfamily. In terms of assembly, monomer.

The protein resides in the cytoplasm. It catalyses the reaction tRNA(Glu) + L-glutamate + ATP = L-glutamyl-tRNA(Glu) + AMP + diphosphate. Functionally, catalyzes the attachment of glutamate to tRNA(Glu) in a two-step reaction: glutamate is first activated by ATP to form Glu-AMP and then transferred to the acceptor end of tRNA(Glu). This Methylobacterium sp. (strain 4-46) protein is Glutamate--tRNA ligase 1.